A 204-amino-acid chain; its full sequence is Holliday junction branch migration complex subunit RuvA (204 aa).

Positions 1–64 (MIAQIRGKLI…QDSILLVGFC (64 aa)) are domain I. A domain II region spans residues 65–143 (TENEKQLFKL…GWTSKEQITF (79 aa)). Residues 144–154 (INNKKDAIDQS) form a flexible linker region. The tract at residues 154–204 (SVMEEDAISALINLGYKSQAAKDAIDRVISEGGENKSLDVILKKALKVLAM) is domain III.

It belongs to the RuvA family. In terms of assembly, homotetramer. Forms an RuvA(8)-RuvB(12)-Holliday junction (HJ) complex. HJ DNA is sandwiched between 2 RuvA tetramers; dsDNA enters through RuvA and exits via RuvB. An RuvB hexamer assembles on each DNA strand where it exits the tetramer. Each RuvB hexamer is contacted by two RuvA subunits (via domain III) on 2 adjacent RuvB subunits; this complex drives branch migration. In the full resolvosome a probable DNA-RuvA(4)-RuvB(12)-RuvC(2) complex forms which resolves the HJ.

It localises to the cytoplasm. Functionally, the RuvA-RuvB-RuvC complex processes Holliday junction (HJ) DNA during genetic recombination and DNA repair, while the RuvA-RuvB complex plays an important role in the rescue of blocked DNA replication forks via replication fork reversal (RFR). RuvA specifically binds to HJ cruciform DNA, conferring on it an open structure. The RuvB hexamer acts as an ATP-dependent pump, pulling dsDNA into and through the RuvAB complex. HJ branch migration allows RuvC to scan DNA until it finds its consensus sequence, where it cleaves and resolves the cruciform DNA. In Syntrophus aciditrophicus (strain SB), this protein is Holliday junction branch migration complex subunit RuvA.